The primary structure comprises 170 residues: Cysteine-rich uncharacterized protein 241L (170 aa).

The sequence is that of Cysteine-rich uncharacterized protein 241L from Acheta domesticus (House cricket).